Reading from the N-terminus, the 422-residue chain is La-related protein 6A (422 aa).

The segment at 1–94 is disordered; the sequence is MSSLPLRSGE…DHGENPVETD (94 aa). Low complexity predominate over residues 48–61; that stretch reads VTESSDDVVVNVSE. Residues 73-89 are compositionally biased toward basic and acidic residues; that stretch reads DHERNSGEDRDQDHGEN. In terms of domain architecture, HTH La-type RNA-binding spans 97–188; the sequence is VVPIDELNQK…KRLSPLPEIR (92 aa). Residues 193–283 form the RRM domain; that stretch reads FTVLVENLPE…NGLRVKLLEQ (91 aa). The segment at 286–422 is disordered; the sequence is GKFAQRRPAR…PTSTQTSHEV (137 aa). A compositionally biased stretch (basic and acidic residues) spans 295-348; the sequence is RREVDKEKDTTGRVHDQTGGEKNKKTREHQNHRLHHSDNPADDDGGNHQKDKNG.

The protein resides in the nucleus. Transcriptional regulator. The polypeptide is La-related protein 6A (LARP6A) (Arabidopsis thaliana (Mouse-ear cress)).